Reading from the N-terminus, the 161-residue chain is tRNA-specific adenosine deaminase (161 aa).

The CMP/dCMP-type deaminase domain occupies 2–120 (TQDELYMKEA…GTLMNLLQEE (119 aa)). A Zn(2+)-binding site is contributed by His53. Catalysis depends on Glu55, which acts as the Proton donor. Zn(2+) contacts are provided by Cys83 and Cys86.

This sequence belongs to the cytidine and deoxycytidylate deaminase family. As to quaternary structure, homodimer. The cofactor is Zn(2+).

The enzyme catalyses adenosine(34) in tRNA + H2O + H(+) = inosine(34) in tRNA + NH4(+). Catalyzes the deamination of adenosine to inosine at the wobble position 34 of tRNA(Arg2). This chain is tRNA-specific adenosine deaminase, found in Bacillus subtilis (strain 168).